The primary structure comprises 63 residues: Juvenile hormone esterase, isoform B (63 aa).

Residue asparagine 20 is glycosylated (N-linked (GlcNAc...) asparagine).

It belongs to the type-B carboxylesterase/lipase family. In terms of tissue distribution, fat body, the site of their biosynthesis, and the hemolymph where it is secreted.

The catalysed reaction is juvenile hormone I + H2O = juvenile hormone I carboxylate + methanol + H(+). It catalyses the reaction juvenile hormone III + H2O = juvenile hormone III carboxylate + methanol + H(+). Functionally, JH esterase plays a crucial role in the decrease of JH activity in lepidopteran insects, by hydrolyzing the methyl ester of JH. It is also involved in the transport of JH. The sequence is that of Juvenile hormone esterase, isoform B from Trichoplusia ni (Cabbage looper).